A 124-amino-acid polypeptide reads, in one-letter code: Heat-labile enterotoxin B chain (124 aa).

The signal sequence occupies residues M1–G21. C30 and C107 are disulfide-bonded.

Heterohexamer of one A chain and of five B chains.

Functionally, the biological activity of the toxin is produced by the A chain, which activates intracellular adenyl cyclase. The polypeptide is Heat-labile enterotoxin B chain (eltB) (Escherichia coli).